We begin with the raw amino-acid sequence, 477 residues long: Glycogen synthase (477 aa).

Lys16 lines the ADP-alpha-D-glucose pocket.

Belongs to the glycosyltransferase 1 family. Bacterial/plant glycogen synthase subfamily.

The catalysed reaction is [(1-&gt;4)-alpha-D-glucosyl](n) + ADP-alpha-D-glucose = [(1-&gt;4)-alpha-D-glucosyl](n+1) + ADP + H(+). It participates in glycan biosynthesis; glycogen biosynthesis. In terms of biological role, synthesizes alpha-1,4-glucan chains using ADP-glucose. This chain is Glycogen synthase, found in Oceanobacillus iheyensis (strain DSM 14371 / CIP 107618 / JCM 11309 / KCTC 3954 / HTE831).